The primary structure comprises 318 residues: Ribosomal lysine N-methyltransferase 5 (318 aa).

Residues Trp95, 139–141 (GSG), Asp161, Trp214, and Met241 each bind S-adenosyl-L-methionine.

Belongs to the class I-like SAM-binding methyltransferase superfamily. RKM5 family.

Its function is as follows. S-adenosyl-L-methionine-dependent protein-lysine N-methyltransferase that methylates 60S ribosomal protein L1. The sequence is that of Ribosomal lysine N-methyltransferase 5 (RKM5) from Zygosaccharomyces rouxii (strain ATCC 2623 / CBS 732 / NBRC 1130 / NCYC 568 / NRRL Y-229).